A 102-amino-acid chain; its full sequence is DET1- and DDB1-associated protein 1 (102 aa).

Ala2 bears the N-acetylalanine mark. Phosphoserine is present on residues Ser33 and Ser95. The disordered stretch occupies residues Asn67–Thr102.

This sequence belongs to the DDA1 family. In terms of assembly, component of numerous DCX (DDB1-CUL4-X-box) E3 ubiquitin-protein ligase complexes which consist of a core of DDB1, cullin-4 (CUL4A or CUL4B), DDA1 and RBX1. Component of the DCX(DCAF15) complex, also named CLR4(DCAF15) complex, composed of DCAF15, DDB1, cullin-4 (CUL4A or CUL4B), DDA1 and RBX1. Part of the DDD core complex containing DET1, DDA1 and DDB1; the DDD core complex recruits a specific UBE2E enzyme, such as UBE2E1, UBE2E2 UBE2E3, to form specific DDD-E2 complexes.

It functions in the pathway protein modification; protein ubiquitination. Functionally, functions as a component of numerous distinct DCX (DDB1-CUL4-X-box) E3 ubiquitin-protein ligase complexes which mediate the ubiquitination and subsequent proteasomal degradation of target proteins. In the DCX complexes, acts as a scaffolding subunit required to stabilize the complex. In Mus musculus (Mouse), this protein is DET1- and DDB1-associated protein 1.